The following is a 104-amino-acid chain: MYAIIKTGGKQYKVEKGVSLVVEKLKGVEAGQEVILREVLLLADGEKLTVGKPIIESARVVAKVVSQKRGPKVLVFKRKPKKGYKKLQGHRQYVTELEITGINT.

This sequence belongs to the bacterial ribosomal protein bL21 family. As to quaternary structure, part of the 50S ribosomal subunit. Contacts protein L20.

Functionally, this protein binds to 23S rRNA in the presence of protein L20. The chain is Large ribosomal subunit protein bL21 from Endomicrobium trichonymphae.